Here is a 120-residue protein sequence, read N- to C-terminus: Large ribosomal subunit protein uL18 (120 aa).

This sequence belongs to the universal ribosomal protein uL18 family. Part of the 50S ribosomal subunit; part of the 5S rRNA/L5/L18/L25 subcomplex. Contacts the 5S and 23S rRNAs.

This is one of the proteins that bind and probably mediate the attachment of the 5S RNA into the large ribosomal subunit, where it forms part of the central protuberance. The chain is Large ribosomal subunit protein uL18 from Bartonella tribocorum (strain CIP 105476 / IBS 506).